Here is a 151-residue protein sequence, read N- to C-terminus: UPF0336 protein Franean1_6066 (151 aa).

Residues 8 to 127 (VGRSYTSDVP…NEVLVTSYEF (120 aa)) form the MaoC-like domain.

This sequence belongs to the UPF0336 family.

This Parafrankia sp. (strain EAN1pec) protein is UPF0336 protein Franean1_6066.